Here is a 556-residue protein sequence, read N- to C-terminus: Formate--tetrahydrofolate ligase (556 aa).

65–72 lines the ATP pocket; the sequence is TPAGEGKS.

This sequence belongs to the formate--tetrahydrofolate ligase family.

The enzyme catalyses (6S)-5,6,7,8-tetrahydrofolate + formate + ATP = (6R)-10-formyltetrahydrofolate + ADP + phosphate. The protein operates within one-carbon metabolism; tetrahydrofolate interconversion. The sequence is that of Formate--tetrahydrofolate ligase from Streptococcus agalactiae serotype V (strain ATCC BAA-611 / 2603 V/R).